Here is a 173-residue protein sequence, read N- to C-terminus: Crossover junction endodeoxyribonuclease RuvC (173 aa).

Active-site residues include Asp8, Glu67, and Asp139. Mg(2+)-binding residues include Asp8, Glu67, and Asp139.

This sequence belongs to the RuvC family. As to quaternary structure, homodimer which binds Holliday junction (HJ) DNA. The HJ becomes 2-fold symmetrical on binding to RuvC with unstacked arms; it has a different conformation from HJ DNA in complex with RuvA. In the full resolvosome a probable DNA-RuvA(4)-RuvB(12)-RuvC(2) complex forms which resolves the HJ. Mg(2+) serves as cofactor.

It is found in the cytoplasm. It carries out the reaction Endonucleolytic cleavage at a junction such as a reciprocal single-stranded crossover between two homologous DNA duplexes (Holliday junction).. In terms of biological role, the RuvA-RuvB-RuvC complex processes Holliday junction (HJ) DNA during genetic recombination and DNA repair. Endonuclease that resolves HJ intermediates. Cleaves cruciform DNA by making single-stranded nicks across the HJ at symmetrical positions within the homologous arms, yielding a 5'-phosphate and a 3'-hydroxyl group; requires a central core of homology in the junction. The consensus cleavage sequence is 5'-(A/T)TT(C/G)-3'. Cleavage occurs on the 3'-side of the TT dinucleotide at the point of strand exchange. HJ branch migration catalyzed by RuvA-RuvB allows RuvC to scan DNA until it finds its consensus sequence, where it cleaves and resolves the cruciform DNA. The sequence is that of Crossover junction endodeoxyribonuclease RuvC from Aeromonas hydrophila subsp. hydrophila (strain ATCC 7966 / DSM 30187 / BCRC 13018 / CCUG 14551 / JCM 1027 / KCTC 2358 / NCIMB 9240 / NCTC 8049).